Consider the following 283-residue polypeptide: MITLKTVRELRAAIARARGDGKRIALVPTMGNLHAGHIALVEKARQRADFVVASIFVNPLQFGPAEDLDKYPRTLAADQEKLLEGGCNLLFAPNAEEMYPGGMQGQTRISVPVVSEGLCGAARPGHFEGVATVVTKLFNIAQPDIALFGEKDYQQLAVIRTLVRDLNMPIQIFGEPTVRAADGLALSSRNGYLNDEQRNVAPALYRILSDIGTAIQAGEQDFAGLCARGLEALRQAGFRPDYLEIREAASLRPAAPGDLRLVVLAAAYLGNTRLIDNLSVDIA.

Position 30–37 (methionine 30–histidine 37) interacts with ATP. Histidine 37 (proton donor) is an active-site residue. A (R)-pantoate-binding site is contributed by glutamine 61. Residue glutamine 61 coordinates beta-alanine. Position 149 to 152 (glycine 149 to aspartate 152) interacts with ATP. Glutamine 155 contributes to the (R)-pantoate binding site. Residues valine 178 and leucine 186–arginine 189 contribute to the ATP site.

The protein belongs to the pantothenate synthetase family. In terms of assembly, homodimer.

Its subcellular location is the cytoplasm. The catalysed reaction is (R)-pantoate + beta-alanine + ATP = (R)-pantothenate + AMP + diphosphate + H(+). It functions in the pathway cofactor biosynthesis; (R)-pantothenate biosynthesis; (R)-pantothenate from (R)-pantoate and beta-alanine: step 1/1. In terms of biological role, catalyzes the condensation of pantoate with beta-alanine in an ATP-dependent reaction via a pantoyl-adenylate intermediate. The chain is Pantothenate synthetase from Azotobacter vinelandii (strain DJ / ATCC BAA-1303).